Here is a 316-residue protein sequence, read N- to C-terminus: MEIVLANPRGFCAGVDRAIAIVNRALECFNPPIYVRHEVVHNKFVVDDLRQRGAIFVDELDQVPDDSIVIFSAHGVSKAVQQEAEHRGLKVFDATCPLVTKVHIEVTKYAREGTEAILIGHEGHPEVEGTMGQYDKSKGGHIYLVEDEADVEALAVNHPEKLAFVTQTTLSIDDTAKVIDALRTKFPQIQGPRKDDICYATQNRQDAVRDLASRCDVVLVVGSPNSSNSNRLRELAERMGKAAYLVDNADQLEQQWFDGVAKIGVTAGASAPEILIKQVIQRLQDWGAEAPKELDGREENITFSLPKELRIQVTQA.

[4Fe-4S] cluster is bound at residue C12. Residues H41 and H74 each contribute to the (2E)-4-hydroxy-3-methylbut-2-enyl diphosphate site. Positions 41 and 74 each coordinate dimethylallyl diphosphate. Isopentenyl diphosphate-binding residues include H41 and H74. Residue C96 coordinates [4Fe-4S] cluster. Residue H124 participates in (2E)-4-hydroxy-3-methylbut-2-enyl diphosphate binding. Position 124 (H124) interacts with dimethylallyl diphosphate. H124 serves as a coordination point for isopentenyl diphosphate. The active-site Proton donor is E126. Residue T168 coordinates (2E)-4-hydroxy-3-methylbut-2-enyl diphosphate. Residue C198 coordinates [4Fe-4S] cluster. Residues S226, S227, N228, and S270 each coordinate (2E)-4-hydroxy-3-methylbut-2-enyl diphosphate. Dimethylallyl diphosphate contacts are provided by S226, S227, N228, and S270. Isopentenyl diphosphate contacts are provided by S226, S227, N228, and S270.

This sequence belongs to the IspH family. [4Fe-4S] cluster is required as a cofactor.

It catalyses the reaction isopentenyl diphosphate + 2 oxidized [2Fe-2S]-[ferredoxin] + H2O = (2E)-4-hydroxy-3-methylbut-2-enyl diphosphate + 2 reduced [2Fe-2S]-[ferredoxin] + 2 H(+). The enzyme catalyses dimethylallyl diphosphate + 2 oxidized [2Fe-2S]-[ferredoxin] + H2O = (2E)-4-hydroxy-3-methylbut-2-enyl diphosphate + 2 reduced [2Fe-2S]-[ferredoxin] + 2 H(+). It functions in the pathway isoprenoid biosynthesis; dimethylallyl diphosphate biosynthesis; dimethylallyl diphosphate from (2E)-4-hydroxy-3-methylbutenyl diphosphate: step 1/1. It participates in isoprenoid biosynthesis; isopentenyl diphosphate biosynthesis via DXP pathway; isopentenyl diphosphate from 1-deoxy-D-xylulose 5-phosphate: step 6/6. Catalyzes the conversion of 1-hydroxy-2-methyl-2-(E)-butenyl 4-diphosphate (HMBPP) into a mixture of isopentenyl diphosphate (IPP) and dimethylallyl diphosphate (DMAPP). Acts in the terminal step of the DOXP/MEP pathway for isoprenoid precursor biosynthesis. This chain is 4-hydroxy-3-methylbut-2-enyl diphosphate reductase, found in Acinetobacter baylyi (strain ATCC 33305 / BD413 / ADP1).